The primary structure comprises 296 residues: Cytidine deaminase (296 aa).

CMP/dCMP-type deaminase domains lie at 47 to 167 and 186 to 296; these read TESE…FGPK and DSSD…VDPI. 88 to 90 is a binding site for substrate; the sequence is NLE. His101 is a binding site for Zn(2+). Residue Glu103 is the Proton donor of the active site. Residues Cys128 and Cys131 each contribute to the Zn(2+) site.

The protein belongs to the cytidine and deoxycytidylate deaminase family. In terms of assembly, homodimer. The cofactor is Zn(2+).

It carries out the reaction cytidine + H2O + H(+) = uridine + NH4(+). The catalysed reaction is 2'-deoxycytidine + H2O + H(+) = 2'-deoxyuridine + NH4(+). In terms of biological role, this enzyme scavenges exogenous and endogenous cytidine and 2'-deoxycytidine for UMP synthesis. This chain is Cytidine deaminase, found in Shewanella oneidensis (strain ATCC 700550 / JCM 31522 / CIP 106686 / LMG 19005 / NCIMB 14063 / MR-1).